Here is a 672-residue protein sequence, read N- to C-terminus: Transcription factor tau 91 kDa subunit (672 aa).

The segment at 1-158 (MAVIPAKKRG…SLGQKGRPIR (158 aa)) is required for DNA-binding. The segment at residues 6–18 (AKKRGRPRKSVVA) is a DNA-binding region (a.T hook). Disordered stretches follow at residues 24-45 (SLASPVSENSGSKRPRRNASKK) and 67-156 (VNNV…KGRP). The span at 71–100 (DDTDDDDFVLNDEGDGEESDNVEIEFENEL) shows a compositional bias: acidic residues. A sufficient for interaction with TFC8 region spans residues 159–672 (LLKDLSSARD…AGLLTLEYLS (514 aa)). Cysteine 375 and cysteine 383 form a disulfide bridge.

In terms of assembly, heterodimer with TFC8. Component of the TFIIIC complex composed of TFC1, TFC3, TFC4, TFC6, TFC7 and TFC8. The subunits are organized in two globular domains, tauA and tauB, connected by a proteolysis-sensitive and flexible linker. Interacts with TFC1, TFC3, TFC4 and directly with TFC8.

It localises to the nucleus. TFIIIC mediates tRNA and 5S RNA gene activation by binding to intragenic promoter elements. Upstream of the transcription start site, TFIIIC assembles the initiation complex TFIIIB-TFIIIC-tDNA, which is sufficient for RNA polymerase III recruitment and function. Part of the tauB domain of TFIIIC that binds boxB DNA promoter sites of tRNA and similar genes. Cooperates with TFC3 in DNA binding. The polypeptide is Transcription factor tau 91 kDa subunit (TFC6) (Saccharomyces cerevisiae (strain ATCC 204508 / S288c) (Baker's yeast)).